Here is a 272-residue protein sequence, read N- to C-terminus: 2-dehydro-3-deoxyphosphooctonate aldolase (272 aa).

This sequence belongs to the KdsA family.

Its subcellular location is the cytoplasm. The catalysed reaction is D-arabinose 5-phosphate + phosphoenolpyruvate + H2O = 3-deoxy-alpha-D-manno-2-octulosonate-8-phosphate + phosphate. Its pathway is carbohydrate biosynthesis; 3-deoxy-D-manno-octulosonate biosynthesis; 3-deoxy-D-manno-octulosonate from D-ribulose 5-phosphate: step 2/3. The protein operates within bacterial outer membrane biogenesis; lipopolysaccharide biosynthesis. In Geotalea daltonii (strain DSM 22248 / JCM 15807 / FRC-32) (Geobacter daltonii), this protein is 2-dehydro-3-deoxyphosphooctonate aldolase.